The primary structure comprises 2035 residues: Ral GTPase-activating protein subunit alpha-1 (2035 aa).

The segment at 343–384 is disordered; the sequence is LVSREESKNDTVDKADKTAEPEQSHSNTSTLTEREPSSSSLC. Residues 345-365 show a composition bias toward basic and acidic residues; sequence SREESKNDTVDKADKTAEPEQ. Residues 366 to 384 show a composition bias toward polar residues; it reads SHSNTSTLTEREPSSSSLC. Phosphoserine occurs at positions 710 and 720. The interval 714–754 is disordered; it reads SFSRGWSRDQPGQAPMRQRSATTTGSPGTEKARSIVRQKTV. T753 carries the phosphothreonine modification. S772 carries the post-translational modification Phosphoserine. T777 bears the Phosphothreonine mark. S796 carries the post-translational modification Phosphoserine. Residues 807-817 are compositionally biased toward basic and acidic residues; sequence ERAKVNKEDTS. Disordered stretches follow at residues 807–834 and 848–911; these read ERAKVNKEDTSPKLPPLNSETGGSSANV and SGNA…SHSD. Polar residues-rich tracts occupy residues 824–833 and 849–862; these read NSETGGSSAN and GNASTMTRRGSSPG. Residues S859, S860, and S863 each carry the phosphoserine modification. Positions 894 to 911 are enriched in low complexity; sequence SPASAGSSDLMSSDSHSD. Phosphoserine occurs at positions 985, 989, 993, and 999. The disordered stretch occupies residues 986–1008; the sequence is ESASPVHSALGSRSQTPSPSTLN. T1001 is modified (phosphothreonine). 2 positions are modified to phosphoserine: S1003 and S1477. The tract at residues 1326–2034 is minimal domain that binds to TCF3/E12; that stretch reads FTNKTVAHVA…PYHHFPADAD (709 aa). A coiled-coil region spans residues 1713–1746; it reads SEKQENDVINAILKQYTEEKEFVEKHFNDLNMKA. Positions 1795–2003 constitute a Rap-GAP domain; that stretch reads LRNLDSRQCR…EERARYLQTI (209 aa).

In terms of assembly, component of the heterodimeric RalGAP1 complex with RALGAPB. Heterodimerization is required for activity. Interacts with the HLH region of TCF3/isoform E12. As to expression, highly expressed in brain, thymus and testis with lower levels in lung and spleen and barely detectable in heart or liver (at protein level).

It is found in the cytoplasm. The protein resides in the nucleus. Catalytic subunit of the heterodimeric RalGAP1 complex which acts as a GTPase activator for the Ras-like small GTPases RALA and RALB. The protein is Ral GTPase-activating protein subunit alpha-1 (Ralgapa1) of Rattus norvegicus (Rat).